Reading from the N-terminus, the 419-residue chain is Phospho-N-acetylmuramoyl-pentapeptide-transferase (419 aa).

10 consecutive transmembrane segments (helical) span residues Tyr-22–Gly-42, Thr-72–Ala-92, Ile-99–Ile-119, Ile-135–Val-155, Val-208–Asn-228, Gly-238–Ser-258, Leu-278–Tyr-298, Phe-303–Ile-323, Leu-328–Phe-348, and Lys-396–Leu-416.

Belongs to the glycosyltransferase 4 family. MraY subfamily. The cofactor is Mg(2+).

The protein localises to the cell inner membrane. It carries out the reaction UDP-N-acetyl-alpha-D-muramoyl-L-alanyl-gamma-D-glutamyl-meso-2,6-diaminopimeloyl-D-alanyl-D-alanine + di-trans,octa-cis-undecaprenyl phosphate = di-trans,octa-cis-undecaprenyl diphospho-N-acetyl-alpha-D-muramoyl-L-alanyl-D-glutamyl-meso-2,6-diaminopimeloyl-D-alanyl-D-alanine + UMP. Its pathway is cell wall biogenesis; peptidoglycan biosynthesis. In terms of biological role, catalyzes the initial step of the lipid cycle reactions in the biosynthesis of the cell wall peptidoglycan: transfers peptidoglycan precursor phospho-MurNAc-pentapeptide from UDP-MurNAc-pentapeptide onto the lipid carrier undecaprenyl phosphate, yielding undecaprenyl-pyrophosphoryl-MurNAc-pentapeptide, known as lipid I. This is Phospho-N-acetylmuramoyl-pentapeptide-transferase from Porphyromonas gingivalis (strain ATCC BAA-308 / W83).